The sequence spans 326 residues: High-affinity zinc uptake system protein ZnuA (326 aa).

The N-terminal stretch at 1–22 (MIRPSSLVLAAALGTAALPARA) is a signal peptide. A Zn(2+)-binding site is contributed by H59. Residues 117–155 (GGEHEHEHEHEHEHEHEHEHDGHGHAEEQAHHDHDHSGT) are compositionally biased toward basic and acidic residues. The tract at residues 117 to 161 (GGEHEHEHEHEHEHEHEHEHDGHGHAEEQAHHDHDHSGTDPHAWL) is disordered. Residues H158, H222, and D295 each coordinate Zn(2+). A disulfide bond links C267 and C322.

It belongs to the bacterial solute-binding protein 9 family. As to quaternary structure, monomer.

The protein resides in the periplasm. Functionally, part of the ATP-binding cassette (ABC) transport system ZnuABC involved in zinc import. Binds zinc with high affinity and specificity and delivers it to the membrane permease for translocation into the cytoplasm. The protein is High-affinity zinc uptake system protein ZnuA of Paracoccus denitrificans (strain Pd 1222).